Reading from the N-terminus, the 208-residue chain is Uracil phosphoribosyltransferase (208 aa).

5-phospho-alpha-D-ribose 1-diphosphate contacts are provided by residues Arg-78, Arg-103, and 130–138 (DPMLATGGS). Uracil contacts are provided by residues Ile-193 and 198–200 (GDA). Asp-199 serves as a coordination point for 5-phospho-alpha-D-ribose 1-diphosphate.

Belongs to the UPRTase family. Mg(2+) is required as a cofactor.

The catalysed reaction is UMP + diphosphate = 5-phospho-alpha-D-ribose 1-diphosphate + uracil. It participates in pyrimidine metabolism; UMP biosynthesis via salvage pathway; UMP from uracil: step 1/1. With respect to regulation, allosterically activated by GTP. Functionally, catalyzes the conversion of uracil and 5-phospho-alpha-D-ribose 1-diphosphate (PRPP) to UMP and diphosphate. This chain is Uracil phosphoribosyltransferase, found in Photorhabdus laumondii subsp. laumondii (strain DSM 15139 / CIP 105565 / TT01) (Photorhabdus luminescens subsp. laumondii).